Reading from the N-terminus, the 134-residue chain is Protein NrdI (134 aa).

It belongs to the NrdI family.

In terms of biological role, probably involved in ribonucleotide reductase function. This is Protein NrdI from Yersinia pseudotuberculosis serotype O:1b (strain IP 31758).